The sequence spans 420 residues: Gamma-glutamyl phosphate reductase (420 aa).

It belongs to the gamma-glutamyl phosphate reductase family.

The protein localises to the cytoplasm. The enzyme catalyses L-glutamate 5-semialdehyde + phosphate + NADP(+) = L-glutamyl 5-phosphate + NADPH + H(+). Its pathway is amino-acid biosynthesis; L-proline biosynthesis; L-glutamate 5-semialdehyde from L-glutamate: step 2/2. Its function is as follows. Catalyzes the NADPH-dependent reduction of L-glutamate 5-phosphate into L-glutamate 5-semialdehyde and phosphate. The product spontaneously undergoes cyclization to form 1-pyrroline-5-carboxylate. The chain is Gamma-glutamyl phosphate reductase from Neisseria meningitidis serogroup C / serotype 2a (strain ATCC 700532 / DSM 15464 / FAM18).